Consider the following 313-residue polypeptide: Ribosomal RNA small subunit methyltransferase H (313 aa).

Residues 35–37 (GGH), Asp55, Phe79, Asp101, and Gln108 contribute to the S-adenosyl-L-methionine site.

It belongs to the methyltransferase superfamily. RsmH family.

The protein localises to the cytoplasm. The enzyme catalyses cytidine(1402) in 16S rRNA + S-adenosyl-L-methionine = N(4)-methylcytidine(1402) in 16S rRNA + S-adenosyl-L-homocysteine + H(+). Functionally, specifically methylates the N4 position of cytidine in position 1402 (C1402) of 16S rRNA. This Salmonella typhi protein is Ribosomal RNA small subunit methyltransferase H.